Consider the following 372-residue polypeptide: Probable E3 ubiquitin-protein ligase makorin-1 (372 aa).

2 C3H1-type zinc fingers span residues 20–45 and 48–75; these read KHVT…HDLT and KPAA…HCKP. The tract at residues 78–110 is disordered; it reads NEEFSSPQMLPPSSPSPSTDPESSQPAPRPKTQ. Positions 93-103 are enriched in low complexity; the sequence is SPSTDPESSQP. A C3H1-type 3 zinc finger spans residues 153 to 180; sequence ALRKQLCPYAAVGECRYGINCAYLHGDV. Residues 181 to 208 form a makorin-type Cys-His region; the sequence is CDMCGLQVLHPTDNSQRSQHTKACIEAH. An RING-type zinc finger spans residues 226–280; sequence CGVCMEVVFEKANPSERRFGILSNCNHCYCLKCIRKWRSAKQFESKIIKSCPECR. The segment at 309–338 adopts a C3H1-type 4 zinc-finger fold; sequence GMGRKPCRYFDEGRGICPFGANCFYKHAFP.

It catalyses the reaction S-ubiquitinyl-[E2 ubiquitin-conjugating enzyme]-L-cysteine + [acceptor protein]-L-lysine = [E2 ubiquitin-conjugating enzyme]-L-cysteine + N(6)-ubiquitinyl-[acceptor protein]-L-lysine.. Its pathway is protein modification; protein ubiquitination. E3 ubiquitin ligase catalyzing the covalent attachment of ubiquitin moieties onto substrate proteins. This is Probable E3 ubiquitin-protein ligase makorin-1 from Tetraodon nigroviridis (Spotted green pufferfish).